Consider the following 174-residue polypeptide: Gamma-crystallin A (174 aa).

2 Beta/gamma crystallin 'Greek key' domains span residues 2–40 (GKITFYEDRGFQGRCYECSSDCPNLQTYFSRCNSIRVDS) and 41–83 (GCWM…RSIP). Residues 84-87 (YTSS) form a connecting peptide region. 2 Beta/gamma crystallin 'Greek key' domains span residues 88-128 (HRIR…HVLE) and 129-171 (GCWV…RRVM).

The protein belongs to the beta/gamma-crystallin family.

In terms of biological role, crystallins are the dominant structural components of the vertebrate eye lens. This Mus musculus (Mouse) protein is Gamma-crystallin A (Cryga).